Consider the following 604-residue polypeptide: Netrin-1 (604 aa).

Positions 1–24 (MMRAVWEALAALAAVACLVGAVRG) are cleaved as a signal peptide. The Laminin N-terminal domain maps to 47–284 (HPRRCIPDFV…AVSDLQVGGR (238 aa)). Residues asparagine 95, asparagine 116, and asparagine 131 are each glycosylated (N-linked (GlcNAc...) asparagine). Intrachain disulfides connect cysteine 119–cysteine 152, cysteine 285–cysteine 294, cysteine 287–cysteine 304, cysteine 306–cysteine 315, cysteine 318–cysteine 338, cysteine 341–cysteine 350, cysteine 343–cysteine 368, cysteine 371–cysteine 380, cysteine 383–cysteine 401, cysteine 404–cysteine 416, cysteine 406–cysteine 423, cysteine 425–cysteine 434, cysteine 437–cysteine 451, cysteine 472–residue 544, and cysteine 491–cysteine 601. Laminin EGF-like domains are found at residues 285 to 340 (CKCN…ECVA), 341 to 403 (CNCN…ACKA), and 404 to 453 (CDCH…PCIK). N-linked (GlcNAc...) asparagine glycosylation occurs at asparagine 417. The NTR domain occupies 472 to 601 (CDSYCKASKG…FQQREKKGKC (130 aa)). The short motif at 530–532 (RGD) is the Cell attachment site element.

As to quaternary structure, binds to its receptors; DCC, UNC5A, UNC5B, UNC5C and probably UNC5D. Binds to its receptor; DSCAM. Interacts with APP.

It localises to the secreted. Its subcellular location is the cytoplasm. Functionally, netrins control guidance of CNS commissural axons and peripheral motor axons. Its association with either DCC or some UNC5 receptors will lead to axon attraction or repulsion, respectively. Binding to UNC5C might cause dissociation of UNC5C from polymerized TUBB3 in microtubules and thereby lead to increased microtubule dynamics and axon repulsion. Involved in dorsal root ganglion axon projection towards the spinal cord. It also serves as a survival factor via its association with its receptors which prevent the initiation of apoptosis. Involved in colorectal tumorigenesis by regulating apoptosis. The sequence is that of Netrin-1 (Ntn1) from Rattus norvegicus (Rat).